Reading from the N-terminus, the 235-residue chain is Secretory carrier-associated membrane protein 5 (235 aa).

The Cytoplasmic segment spans residues 1 to 39 (MAEKVNNFPPLPKFIPLKPCFYQDFEADIPPQHVSMTKR). Residues 40–60 (LYYLWMLNSVTLAVNLVGCLA) traverse the membrane as a helical segment. Over 61-67 (WLIGGGG) the chain is Extracellular. A helical membrane pass occupies residues 68 to 88 (ATNFGLAFLWLILFTPCSYVC). Residues 89–102 (WFRPIYKAFKTDSS) are Cytoplasmic-facing. A helical transmembrane segment spans residues 103–125 (FSFMAFFFTFMAQLVISIIQAVG). Residues 126 to 148 (IPGWGVCGWIATISFFGTNIGSA) are Extracellular-facing. The helical transmembrane segment at 149–169 (VVMLIPTVMFTVMAVFSFIAL) threads the bilayer. The Cytoplasmic segment spans residues 170-235 (SMVHKFYRGS…TPNYTYSNEM (66 aa)).

The protein belongs to the SCAMP family. SCAMP5 subfamily. As to quaternary structure, interacts (via C-terminal part) with SYT1 and SYT2; interaction with synaptotagmins making a link with the SNARE molecules. Interacts with SLC9A7. In terms of tissue distribution, expressed both by neuronal and non-neuronal tissues. Expressed in brain, stomach, thyroid, spinal cord, lymph node, trachea, adrenal gland, bone marrow and in the different parts of brain. In thyroid tissues, it is expressed by the follicular epithelial cells. In the adrenal gland tissues it is detected in the zona fasciculata of the cortex region (at protein level).

It is found in the cell membrane. It localises to the golgi apparatus membrane. Its subcellular location is the golgi apparatus. The protein resides in the trans-Golgi network membrane. The protein localises to the recycling endosome membrane. It is found in the cytoplasmic vesicle. It localises to the secretory vesicle. Its subcellular location is the synaptic vesicle membrane. In terms of biological role, required for the calcium-dependent exocytosis of signal sequence-containing cytokines such as CCL5. Probably acts in cooperation with the SNARE machinery. May play a role in accumulation of expanded polyglutamine (polyQ) protein huntingtin (HTT) in case of endoplasmic reticulum stress by inhibiting the endocytosis pathway. The sequence is that of Secretory carrier-associated membrane protein 5 (SCAMP5) from Homo sapiens (Human).